The primary structure comprises 375 residues: Putrescine N-methyltransferase 1 (375 aa).

Composition is skewed to polar residues over residues 24–50 (HQNG…QNGT) and 57–77 (HQNG…GNEL). The interval 24–77 (HQNGTSEHLNGYQNGTSKHQNGHQNGTFEHRNGHQNGTSEQQNGTISHDNGNEL) is disordered. The 238-residue stretch at 86–323 (PGWFSEFSAL…GVIGYMLCST (238 aa)) folds into the PABS domain. Residues Q117, E192, and 223–224 (DG) contribute to the S-adenosyl-L-methionine site. The Proton acceptor role is filled by D242. Y311 is an S-adenosyl-L-methionine binding site.

This sequence belongs to the class I-like SAM-binding methyltransferase superfamily. Putrescine methyltransferase family. Predominantly expressed in roots.

It catalyses the reaction putrescine + S-adenosyl-L-methionine = N-methylputrescine + S-adenosyl-L-homocysteine + H(+). Its pathway is alkaloid biosynthesis; nicotine biosynthesis. Functionally, involved in the biosynthesis of pyridine alkaloid natural products, leading mainly to the production of anabasine, anatabine, nicotine and nornicotine, effective deterrents against herbivores with antiparasitic and pesticide properties (neurotoxins); nornicotine serves as the precursor in the synthesis of the carcinogen compound N'-nitrosonornicotine (NNN). Methyltransferase that mediates the conversion of putrescine to N-methylputrescine. Promotes leaves ripening. The protein is Putrescine N-methyltransferase 1 of Nicotiana tabacum (Common tobacco).